A 540-amino-acid chain; its full sequence is 2-isopropylmalate synthase (540 aa).

The region spanning 8-271 (VLIFDTTLRD…NPFFGRESDS (264 aa)) is the Pyruvate carboxyltransferase domain. Mn(2+) is bound by residues D17, H208, H210, and N244. The segment at 408–540 (QLRLVQVSCG…AVLADRRPGI (133 aa)) is regulatory domain.

It belongs to the alpha-IPM synthase/homocitrate synthase family. LeuA type 1 subfamily. In terms of assembly, homodimer. Mn(2+) is required as a cofactor.

The protein localises to the cytoplasm. The catalysed reaction is 3-methyl-2-oxobutanoate + acetyl-CoA + H2O = (2S)-2-isopropylmalate + CoA + H(+). The protein operates within amino-acid biosynthesis; L-leucine biosynthesis; L-leucine from 3-methyl-2-oxobutanoate: step 1/4. In terms of biological role, catalyzes the condensation of the acetyl group of acetyl-CoA with 3-methyl-2-oxobutanoate (2-ketoisovalerate) to form 3-carboxy-3-hydroxy-4-methylpentanoate (2-isopropylmalate). This chain is 2-isopropylmalate synthase, found in Prochlorococcus marinus (strain MIT 9303).